We begin with the raw amino-acid sequence, 218 residues long: Tegument protein UL51 homolog (218 aa).

Residue cysteine 11 is the site of S-palmitoyl cysteine; by host attachment. Positions 199–218 (APPPVVRQPEHSGPTELALT) are disordered.

It belongs to the herpesviridae UL51 family. In terms of assembly, homodimer. Interacts with BBRF2; the BBRF2-BSRF1 complexes oligomerize which might play a role in tethering the viral nucleocapsids to the host Golgi membrane during secondary envelopment. Interacts with BGLF3.5. Interacts with BALF1. Interacts with glycoprotein gB. Interacts with glycoprotein heterodimer gH/gL. In terms of processing, phosphorylated. Palmitoylation is necessary for Golgi localization.

It is found in the host cytoplasm. The protein resides in the virion. Its subcellular location is the host Golgi apparatus. Plays several roles during the time course of infection, including egress of virus particles from the perinuclear space and secondary envelopment of cytoplasmic capsids that bud into specific trans-Golgi network (TGN)-derived membranes. In Homo sapiens (Human), this protein is Tegument protein UL51 homolog.